A 360-amino-acid polypeptide reads, in one-letter code: Tryptophan--tRNA ligase, mitochondrial (360 aa).

The transit peptide at 1-18 (MALHSMRKARERWSFIRA) directs the protein to the mitochondrion. ATP is bound by residues glutamine 42 and 48–51 (HLGN). Aspartate 167 is a binding site for L-tryptophan. Residues 179 to 181 (GED), valine 217, and 226 to 230 (KMSKS) contribute to the ATP site.

This sequence belongs to the class-I aminoacyl-tRNA synthetase family. In terms of tissue distribution, brain.

The protein localises to the mitochondrion matrix. Its subcellular location is the mitochondrion. The enzyme catalyses tRNA(Trp) + L-tryptophan + ATP = L-tryptophyl-tRNA(Trp) + AMP + diphosphate + H(+). Functionally, catalyzes the attachment of tryptophan to tRNA(Trp) in a two-step reaction: tryptophan is first activated by ATP to form Trp-AMP and then transferred to the acceptor end of tRNA(Trp). The sequence is that of Tryptophan--tRNA ligase, mitochondrial (WARS2) from Homo sapiens (Human).